The sequence spans 865 residues: Alanine--tRNA ligase (865 aa).

Positions 568, 572, 670, and 674 each coordinate Zn(2+).

This sequence belongs to the class-II aminoacyl-tRNA synthetase family. It depends on Zn(2+) as a cofactor.

The protein localises to the cytoplasm. It catalyses the reaction tRNA(Ala) + L-alanine + ATP = L-alanyl-tRNA(Ala) + AMP + diphosphate. In terms of biological role, catalyzes the attachment of alanine to tRNA(Ala) in a two-step reaction: alanine is first activated by ATP to form Ala-AMP and then transferred to the acceptor end of tRNA(Ala). Also edits incorrectly charged Ser-tRNA(Ala) and Gly-tRNA(Ala) via its editing domain. In Vibrio campbellii (strain ATCC BAA-1116), this protein is Alanine--tRNA ligase.